A 782-amino-acid polypeptide reads, in one-letter code: MKISSGAINFSTIPNQVKKLITSIREHTKNGLASKITSVKNTHTSLNEKFKTGKDSPIEFALPQKIKDFFQPKDKNTLNKTLITVKNIKDTNNAGKKNISAEDVSKMNAAFMRKHIANQTCDYNYRMTGAAPLPGGVSVSANNRPTVSEGRTPPVSPSLSLQATSSPSSPADWAKKLTDAVLRQKAGETLTAADRDFSNADFRNITFSKILPPSFMERDGDIIKGFNFSNSKFTYSDISHLHFDECRFTYSTLSDVVCSNTKFSNSDMNEVVLQYSITTQQQPSFIHTTLKNTLIRHKANLSGVILNEPHNSSPPSVSGGGNFIRLGDIWLQMPLLWTENAVDGFLNHEHNNGKSILMTIDSLPDKYSQEKVQAMEDLVKSLRGGRLTEACIRPVESSLVSVLAHPPYTQSALIREWLGPVQERFFAHQCQTYNDVPLPTPDTYYQQRILPVLLDSFDRNSAAMTTHSGLFNQVILHCMTGVDCTDGTRQKAAALYEQYLAHPAVSPHIHNGLFGNYDGSSDWTTRAADNFLLLSSQDSDTAMMLSTDTLLTMLNPTPDTAWDNFYLQRAGENVSTAQISPVELFRHDFPVFLAAFNQQATQRRFGELIDIILSTEEHGELNQQFLAATNQKHSTVKLIDDASVSRLATIFDPLLPEGKLSPAHYQHILSAYHLTDATPQKQAETLFCLSTAFARYSSSAIFGTEHDSPPALRGYAEALMQKAWELSPAIFPTSEQFTDWSDRFHGLHGAFTCTCVVADSMQRHARKYFPSVLSSILPLSWA.

Residues Val-137–Ala-171 are disordered. Low complexity predominate over residues Pro-157 to Ala-171. Cys-753 serves as the catalytic Glycyl thioester intermediate.

It belongs to the SopA E3 ligase family. Ubiquitinated in the presence of host E1 ubiquitin-activating enzyme, E2 ubiquitin-conjugating enzyme and ubiquitin.

It is found in the secreted. The protein localises to the host mitochondrion. The catalysed reaction is S-ubiquitinyl-[E2 ubiquitin-conjugating enzyme]-L-cysteine + [acceptor protein]-L-lysine = [E2 ubiquitin-conjugating enzyme]-L-cysteine + N(6)-ubiquitinyl-[acceptor protein]-L-lysine.. Its function is as follows. Effector proteins function to alter host cell physiology and promote bacterial survival in host tissues. This protein is an E3 ubiquitin ligase that interferes with host's ubiquitination pathway. Required for inducing polymorphonuclear leukocytes migration across the intestinal epithelium. The sequence is that of E3 ubiquitin-protein ligase SopA (sopA) from Salmonella dublin.